The following is a 321-amino-acid chain: Agamous-like MADS-box protein AGL80 (321 aa).

Residues Met-1–Asn-61 form the MADS-box domain. Positions Phe-89–Thr-114 form a coiled coil.

In terms of assembly, interacts with AGL61 and AGL62. Forms a heterodimer with AGL61. Interacts with MEE14/CBP1. In terms of tissue distribution, expressed in the central cell of the female gametophyte and in early endosperm. Also detected in ovaries, young siliques, roots, leaves, stems, young flowers and anthers.

It localises to the nucleus. Its function is as follows. Probable transcription factor. Controls central cell differentiation during female gametophyte development. Required for the expression of DEMETER and DD46, but not for the expression of FIS2. Probable transcription factor that may function in the maintenance of the proper function of the central cell in pollen tube attraction. The sequence is that of Agamous-like MADS-box protein AGL80 (AGL80) from Arabidopsis thaliana (Mouse-ear cress).